The chain runs to 62 residues: Zinc finger-containing protein P28b (62 aa).

An RING-type; degenerate zinc finger spans residues Met1 to Arg46.

This Vaccinia virus (strain Western Reserve) (VACV) protein is Zinc finger-containing protein P28b.